The following is a 300-amino-acid chain: MRALEGPGLSLLCLVLALPALLPVPAVRGVAETPTYPWRDAETGERLVCAQCPPGTFVQRPCRRDSPTTCGPCPPRHYTQFWNYLERCRYCNVLCGEREEEARACHATHNRACRCRTGFFAHAGFCLEHASCPPGAGVIAPGTPSQNTQCQPCPPGTFSASSSSSEQCQPHRNCTALGLALNVPGSSSHDTLCTSCTGFPLSTRVPGAEECERAVIDFVAFQDISIKRLQRLLQALEAPEGWGPTPRAGRAALQLKLRRRLTELLGAQDGALLVRLLQALRVARMPGLERSVRERFLPVH.

Positions 1–29 (MRALEGPGLSLLCLVLALPALLPVPAVRG) are cleaved as a signal peptide. 4 TNFR-Cys repeats span residues 31-70 (AETPTYPWRDAETGERLVCAQCPPGTFVQRPCRRDSPTTC), 72-113 (PCPP…NRAC), 115-150 (CRTGFFAHAGFCLEHASCPPGAGVIAPGTPSQNTQC), and 152-193 (PCPP…DTLC). 8 disulfides stabilise this stretch: Cys49–Cys62, Cys52–Cys70, Cys73–Cys88, Cys91–Cys105, Cys95–Cys113, Cys115–Cys126, Cys132–Cys150, and Cys153–Cys168. An N-linked (GlcNAc...) asparagine glycan is attached at Asn173. The cysteines at positions 174 and 193 are disulfide-linked.

As to expression, detected in fetal lung, brain and liver. Detected in adult stomach, spinal cord, lymph node, trachea, spleen, colon and lung. Highly expressed in several primary tumors from colon, stomach, rectum, esophagus and in SW480 colon carcinoma cells.

Its subcellular location is the secreted. Decoy receptor that can neutralize the cytotoxic ligands TNFS14/LIGHT, TNFSF15 and TNFSF6/FASL. Protects against apoptosis. The chain is Tumor necrosis factor receptor superfamily member 6B (TNFRSF6B) from Homo sapiens (Human).